The chain runs to 566 residues: OTU domain-containing protein 5 (566 aa).

Disordered regions lie at residues 1 to 117 (MTIL…GDAL) and 145 to 175 (GPGH…GAGY). Positions 11 to 30 (PPDADPANEPPPPGPLPPAP) are enriched in pro residues. Positions 34-47 (AGVGVGGGGTGVGG) are enriched in gly residues. Over residues 63 to 75 (ASPPPQGPLPGPP) the composition is skewed to pro residues. Position 64 is a phosphoserine (Ser64). Residues 84–97 (AVPPGAVAGPRPQQ) show a composition bias toward low complexity. The segment covering 105-115 (GPGGPGGGPGD) has biased composition (gly residues). Position 165 is a phosphoserine (Ser165). Tyr175 carries the post-translational modification Phosphotyrosine. Residue Ser177 is modified to Phosphoserine. Position 195 is a phosphothreonine (Thr195). One can recognise an OTU domain in the interval 213 to 336 (FIIKQMKEDG…NIHYNSVVNP (124 aa)). The segment at 218-224 (MKEDGAC) is cys-loop. Asp221 is an active-site residue. The Nucleophile role is filled by Cys224. A variable-loop region spans residues 273-283 (KRKNNCHGNHI). Ser323 is subject to Phosphoserine. A his-loop region spans residues 324–329 (YHRNIH). His329 is an active-site residue. 2 positions are modified to phosphoserine: Ser332 and Ser370. The tract at residues 413–499 (ARQVRGPSQP…TSSQFSAGGD (87 aa)) is disordered. 2 stretches are compositionally biased toward low complexity: residues 425 to 438 (ASAT…AASS) and 445 to 457 (SRSP…ASSP). Residue Ser447 is modified to Phosphoserine. Thr502 carries the post-translational modification Phosphothreonine. Phosphoserine is present on Ser503.

This sequence belongs to the peptidase C85 family. In terms of assembly, interacts with TRAF3. In terms of processing, phosphorylation at Ser-177 is required for deubiquitinating activity. Phosphorylation at Ser-323, Ser-332 and Ser-503 by MTOR promotes its activity.

The protein resides in the nucleus. It carries out the reaction Thiol-dependent hydrolysis of ester, thioester, amide, peptide and isopeptide bonds formed by the C-terminal Gly of ubiquitin (a 76-residue protein attached to proteins as an intracellular targeting signal).. Its activity is regulated as follows. Inhibited by N-ethyl-maleimide (NEM). Functionally, deubiquitinating enzyme that functions as a negative regulator of the innate immune system. Has peptidase activity towards 'Lys-48'- and 'Lys-63'-linked polyubiquitin chains. Can also cleave 'Lys-11'-linked ubiquitin chains (in vitro). Acts via TRAF3 deubiquitination and subsequent suppression of type I interferon (IFN) production. Controls neuroectodermal differentiation through cleaving 'Lys-48'-linked ubiquitin chains to counteract degradation of select chromatin regulators such as ARID1A, HDAC2 and HCF1. Acts as a positive regulator of mTORC1 and mTORC2 signaling following phosphorylation by MTOR: acts by mediating deubiquitination of BTRC, leading to its stability. The protein is OTU domain-containing protein 5 of Mus musculus (Mouse).